A 398-amino-acid polypeptide reads, in one-letter code: 1-deoxy-D-xylulose 5-phosphate reductoisomerase (398 aa).

NADPH contacts are provided by Thr-10, Gly-11, Ser-12, Ile-13, Gly-36, Asn-38, and Asn-124. Lys-125 contacts 1-deoxy-D-xylulose 5-phosphate. Residue Glu-126 participates in NADPH binding. Residue Asp-150 coordinates Mn(2+). 1-deoxy-D-xylulose 5-phosphate contacts are provided by Ser-151, Glu-152, Ser-186, and His-209. Mn(2+) is bound at residue Glu-152. Position 215 (Gly-215) interacts with NADPH. Ser-222, Asn-227, Lys-228, and Glu-231 together coordinate 1-deoxy-D-xylulose 5-phosphate. A Mn(2+)-binding site is contributed by Glu-231.

Belongs to the DXR family. Homodimer. Requires Mg(2+) as cofactor. It depends on Mn(2+) as a cofactor.

It carries out the reaction 2-C-methyl-D-erythritol 4-phosphate + NADP(+) = 1-deoxy-D-xylulose 5-phosphate + NADPH + H(+). It participates in isoprenoid biosynthesis; isopentenyl diphosphate biosynthesis via DXP pathway; isopentenyl diphosphate from 1-deoxy-D-xylulose 5-phosphate: step 1/6. Its function is as follows. Catalyzes the NADPH-dependent rearrangement and reduction of 1-deoxy-D-xylulose-5-phosphate (DXP) to 2-C-methyl-D-erythritol 4-phosphate (MEP). The protein is 1-deoxy-D-xylulose 5-phosphate reductoisomerase of Pectobacterium atrosepticum (strain SCRI 1043 / ATCC BAA-672) (Erwinia carotovora subsp. atroseptica).